The chain runs to 341 residues: GTPase Obg (341 aa).

An Obg domain is found at 1-159 (MKFLDQAKVY…RAIWLRLKLI (159 aa)). The OBG-type G domain occupies 160 to 327 (ADAGLVGLPN…VLRAGAHIIE (168 aa)). GTP-binding positions include 166–173 (GLPNAGKS), 191–195 (FTTLH), 212–215 (DIPG), 279–282 (SQID), and 308–310 (SAV). Mg(2+) contacts are provided by Ser-173 and Thr-193.

It belongs to the TRAFAC class OBG-HflX-like GTPase superfamily. OBG GTPase family. Monomer. Mg(2+) serves as cofactor.

The protein resides in the cytoplasm. An essential GTPase which binds GTP, GDP and possibly (p)ppGpp with moderate affinity, with high nucleotide exchange rates and a fairly low GTP hydrolysis rate. Plays a role in control of the cell cycle, stress response, ribosome biogenesis and in those bacteria that undergo differentiation, in morphogenesis control. The protein is GTPase Obg of Bartonella tribocorum (strain CIP 105476 / IBS 506).